We begin with the raw amino-acid sequence, 600 residues long: Elongation factor 4 (600 aa).

A tr-type G domain is found at 5 to 187 (KYIRNFSIIA…AIVNKLHPPK (183 aa)). GTP-binding positions include 17–22 (DHGKST) and 134–137 (NKID).

This sequence belongs to the TRAFAC class translation factor GTPase superfamily. Classic translation factor GTPase family. LepA subfamily.

The protein localises to the cell inner membrane. It catalyses the reaction GTP + H2O = GDP + phosphate + H(+). Required for accurate and efficient protein synthesis under certain stress conditions. May act as a fidelity factor of the translation reaction, by catalyzing a one-codon backward translocation of tRNAs on improperly translocated ribosomes. Back-translocation proceeds from a post-translocation (POST) complex to a pre-translocation (PRE) complex, thus giving elongation factor G a second chance to translocate the tRNAs correctly. Binds to ribosomes in a GTP-dependent manner. This chain is Elongation factor 4, found in Rickettsia akari (strain Hartford).